Consider the following 315-residue polypeptide: Probable cytosolic iron-sulfur protein assembly protein CIAO1 homolog (315 aa).

WD repeat units follow at residues 11–50 (GHEDRVWNVAWNPSGTILASCGGDKSIRLWGLEGGSWVCK), 56–95 (GHQRTVRGVSWSNCGRYLASSSFDGTTCIWRRQDDTFESC), 100–139 (GHENEVKACGWSPSGRFLATCSRDKTVWIWEVGEDEEFEC), 145–188 (CHSQ…CTLD), 189–229 (KHAS…RSWE), 236–275 (RHPRPVYDVSWCRTRGFLATACGDNAVRVFVKDGGDCSWR), and 283–315 (AHSQDVNSVSWSPSGGLLASAGDDGYVRLWQID).

It belongs to the WD repeat CIA1 family.

Functionally, essential component of the cytosolic iron-sulfur (Fe/S) protein assembly machinery. Required for the maturation of extramitochondrial Fe/S proteins. The polypeptide is Probable cytosolic iron-sulfur protein assembly protein CIAO1 homolog (Ixodes scapularis (Black-legged tick)).